Consider the following 131-residue polypeptide: Ribosome-binding factor A (131 aa).

This sequence belongs to the RbfA family. Monomer. Binds 30S ribosomal subunits, but not 50S ribosomal subunits or 70S ribosomes.

It localises to the cytoplasm. One of several proteins that assist in the late maturation steps of the functional core of the 30S ribosomal subunit. Associates with free 30S ribosomal subunits (but not with 30S subunits that are part of 70S ribosomes or polysomes). Required for efficient processing of 16S rRNA. May interact with the 5'-terminal helix region of 16S rRNA. In Gloeothece citriformis (strain PCC 7424) (Cyanothece sp. (strain PCC 7424)), this protein is Ribosome-binding factor A.